Consider the following 1356-residue polypeptide: Collagen alpha-2(I) chain (1356 aa).

The first 22 residues, 1–22 (MLSFVDNRILLLLAVTSLLASC), serve as a signal peptide directing secretion. The disordered stretch occupies residues 22–1112 (CQSGGLKGPR…DQSGGYDEYR (1091 aa)). Pyrrolidone carboxylic acid is present on residues Gln23 and Gln73. Positions 23–72 (QSGGLKGPRGAKGPRGDRGPQGPNGRDGKAGLPGIAGPPGPPGLGGNFAA) are cleaved as a propeptide — N-terminal propeptide. Gly residues predominate over residues 76-88 (GGKGSDPGPGPMG). Lys78 is modified (allysine). Residue Lys171 is modified to 5-hydroxylysine; alternate. A glycan (O-linked (Gal...) hydroxylysine; alternate) is linked at Lys171. Positions 219-248 (AGPAGPAGARGADGSTGPAGPAGPLGAAGP) are enriched in low complexity. The span at 259–280 (GEIGGAGSNGPSGPQGGRGEPG) shows a compositional bias: gly residues. Low complexity predominate over residues 281 to 315 (INGAVGPVGPVGNPGNNGINGAKGAAGLPGVAGAP). Pro residues predominate over residues 317-327 (FPGPRGGPGPQ). 4 stretches are compositionally biased toward gly residues: residues 334–343 (GARGLGGDPG), 391–412 (GARG…GPIG), 418–427 (GATGPGGIRG), and 448–457 (GNSGQGGPPG). Over residues 479–489 (PRGQPGNIGFP) the composition is skewed to low complexity. Gly residues predominate over residues 511-520 (GLRGGPGADG). Composition is skewed to low complexity over residues 521-564 (NNGA…AGKA) and 587-603 (NSGP…IGAR). Gly residues-rich tracts occupy residues 610–619 (GPDGGKGEPG) and 628–646 (GHQG…GTPG). A compositionally biased stretch (basic and acidic residues) spans 648 to 659 (KGEKGEGGHRGL). The span at 716–731 (LPGFAGPPGSDGQSGP) shows a compositional bias: low complexity. A compositionally biased stretch (gly residues) spans 736 to 745 (GPAGGKGDVG). 2 stretches are compositionally biased toward low complexity: residues 746–764 (PAGP…ASGP) and 776–786 (PSGLTGFPGAA). Gly residues predominate over residues 787-796 (GRVGGPGPAG). The segment covering 797–809 (IAGPPGSAGPAGK) has biased composition (low complexity). Gly residues predominate over residues 817–826 (GDPGPGGPQG). The segment covering 827-858 (EQGVVGPAGISGDKGPSGESGPPGAPGTAGPQ) has biased composition (low complexity). Positions 877 to 886 (GLPGGPGAVG) are enriched in gly residues. The span at 888–903 (PGRLGPAGASGPRGPA) shows a compositional bias: low complexity. A compositionally biased stretch (gly residues) spans 976 to 985 (GPTGNGGPVG). Over residues 999–1013 (RGEKGGAGEKGDRGM) the composition is skewed to basic and acidic residues. Over residues 1083–1095 (AGPPGSPGLPGPA) the composition is skewed to pro residues. The propeptide at 1114–1356 (DQPSFRAKDY…GLDIGPVCFK (243 aa)) is C-terminal propeptide. The 234-residue stretch at 1123–1356 (YEVDATIKSL…GLDIGPVCFK (234 aa)) folds into the Fibrillar collagen NC1 domain. Cystine bridges form between Cys1153–Cys1185, Cys1193–Cys1354, and Cys1262–Cys1307. 5 residues coordinate Ca(2+): Asp1171, Asn1173, Gln1174, Cys1176, and Asp1179. An N-linked (GlcNAc...) asparagine glycan is attached at Asn1257.

This sequence belongs to the fibrillar collagen family. As to quaternary structure, trimers of one alpha 2(I) and two alpha 1(I) chains. Post-translationally, prolines at the third position of the tripeptide repeating unit (G-X-Y) are hydroxylated in some or all of the chains. As to expression, forms the fibrils of tendon, ligaments and bones. In bones the fibrils are mineralized with calcium hydroxyapatite.

It localises to the secreted. The protein localises to the extracellular space. Its subcellular location is the extracellular matrix. Its function is as follows. Type I collagen is a member of group I collagen (fibrillar forming collagen). This chain is Collagen alpha-2(I) chain (col1a2), found in Oncorhynchus mykiss (Rainbow trout).